Consider the following 408-residue polypeptide: Acetate kinase (408 aa).

A Mg(2+)-binding site is contributed by N7. ATP is bound at residue K14. Substrate is bound at residue R91. D148 acts as the Proton donor/acceptor in catalysis. ATP is bound by residues 208–212, 283–285, and 331–335; these read HLGNG, DFR, and GIGEN. Residue E384 participates in Mg(2+) binding.

Belongs to the acetokinase family. Homodimer. It depends on Mg(2+) as a cofactor. Requires Mn(2+) as cofactor.

It localises to the cytoplasm. The catalysed reaction is acetate + ATP = acetyl phosphate + ADP. It functions in the pathway metabolic intermediate biosynthesis; acetyl-CoA biosynthesis; acetyl-CoA from acetate: step 1/2. Its function is as follows. Catalyzes the formation of acetyl phosphate from acetate and ATP. Can also catalyze the reverse reaction. The polypeptide is Acetate kinase (Methanosarcina acetivorans (strain ATCC 35395 / DSM 2834 / JCM 12185 / C2A)).